The primary structure comprises 140 residues: Nucleoside diphosphate kinase (140 aa).

Residues lysine 11, phenylalanine 59, arginine 87, threonine 93, arginine 104, and asparagine 114 each coordinate ATP. Histidine 117 acts as the Pros-phosphohistidine intermediate in catalysis.

It belongs to the NDK family. As to quaternary structure, homotetramer. Requires Mg(2+) as cofactor.

It is found in the cytoplasm. It catalyses the reaction a 2'-deoxyribonucleoside 5'-diphosphate + ATP = a 2'-deoxyribonucleoside 5'-triphosphate + ADP. It carries out the reaction a ribonucleoside 5'-diphosphate + ATP = a ribonucleoside 5'-triphosphate + ADP. In terms of biological role, major role in the synthesis of nucleoside triphosphates other than ATP. The ATP gamma phosphate is transferred to the NDP beta phosphate via a ping-pong mechanism, using a phosphorylated active-site intermediate. In Dinoroseobacter shibae (strain DSM 16493 / NCIMB 14021 / DFL 12), this protein is Nucleoside diphosphate kinase.